The following is a 374-amino-acid chain: Spore germination protein GerLB (374 aa).

10 helical membrane passes run 16 to 36 (IGFAVSSTIIGIGALSMPRDI), 44 to 64 (DGWIILLLGGLICAVLGWFVT), 86 to 106 (PVAYTISSILVLTFAALTAYE), 122 to 142 (TPIQLLSFFFLLVVIYGIAGS), 149 to 169 (LNVLFLPIVLIAIVLLSLLNI), 192 to 212 (VKNSIFTFIGFEVALFYAVLL), 227 to 247 (AVMVNVLSYILIYVTCISVFT), 279 to 301 (FFTTWIITIYNTTAMYYDVASLL), 313 to 333 (IFIFISAPIIFMVNMIPSSLN), and 341 to 361 (YLAWIDMGCVVLAPLLVLIVY).

Belongs to the amino acid-polyamine-organocation (APC) superfamily. Spore germination protein (SGP) (TC 2.A.3.9) family.

The protein resides in the membrane. Its function is as follows. Contributes to the L-alanine germination response. The sequence is that of Spore germination protein GerLB (gerLB) from Bacillus cereus.